A 37-amino-acid polypeptide reads, in one-letter code: Large ribosomal subunit protein bL36c (37 aa).

The protein belongs to the bacterial ribosomal protein bL36 family.

The protein localises to the plastid. It is found in the chloroplast. The sequence is that of Large ribosomal subunit protein bL36c from Gracilaria tenuistipitata var. liui (Red alga).